The chain runs to 874 residues: MLKFLKNLLDDNAREIKRLTARVEEINSLEPQMQKLSDEELRAKTGEFKERIARGESLDELLPEAFAVVREASRRVLGMRHFDVQLMGGIVLHEGKIAEMKTGEGKTLVATLPAYLNALTGRGVHIVTVNDYLARRDAEWMGKIYKFLGLSVGLVVHGMDYAEKKAAYLADITYGTNNEFGFDYLRDNMAIHPDQVVQRELYYAIIDEVDSILIDEARTPLIISGEAEKSTDLYYTFAKIVKQLVPGEDYTVDEKAHAVMPTEAGIHKVEKMLGIQNLYADEHMELTHHLNAALKAQALMKRDRDYVVKDGQVIIVDEFTGRLMFGRRYSDGLHQAIEAKEGVKIEQETQTLATITFQNYFRMYEKLAGMTGTAETEENEFRKIYNLSVVVIPTHKPMIRKDLPDVIFKTEKAKFKAIVEEVARRHQTGQPILIGTISIEKSEMLSEMLKKRGIPHQVLNAKYHEKEAEIVAQAGRLGAVTIATNMAGRGTDILLGGNPEFLALQELRKMGKTPEDDPELYRELLAKYKKITDEEHKKVVELGGLHIIGTERHESRRIDNQLRGRAGRQGDPGSSQFFISLEDDLMRLFGSDNIAGLMDRLGLDEDTPIEHPLITRSIETAQKRVENRNFEIRKHVLEYDNVMNQQRELIYSQRRRVLFGEDVLTFVHQMIEAVVERAVDTYCPDGVHPEEWDLKGLLEYAHNVFLPNHQLTPEDLADTGKKALVEFLVEKAKEYYKKREEELGGEQLRELERYVILRVVDEKWMDHLDAMDQLREGIGLRAYGQKDPLVEYKIESVEMFNNMIAAIQEDVVRYLMRLSVVRQPETRRVRRVVENRYQEEGPKKPYRREQKIGRNDPCPCGSGKKYKKCCGRNG.

ATP contacts are provided by residues Gln85, 103–107, and Asp492; that span reads GEGKT. Residues 839-854 are compositionally biased toward basic and acidic residues; sequence EEGPKKPYRREQKIGR. The tract at residues 839–864 is disordered; that stretch reads EEGPKKPYRREQKIGRNDPCPCGSGK. The Zn(2+) site is built by Cys858, Cys860, Cys869, and Cys870.

Belongs to the SecA family. As to quaternary structure, monomer and homodimer. Part of the essential Sec protein translocation apparatus which comprises SecA, SecYEG and auxiliary proteins SecDF. Other proteins may also be involved. The cofactor is Zn(2+).

It localises to the cell membrane. The protein localises to the cytoplasm. The catalysed reaction is ATP + H2O + cellular proteinSide 1 = ADP + phosphate + cellular proteinSide 2.. Its function is as follows. Part of the Sec protein translocase complex. Interacts with the SecYEG preprotein conducting channel. Has a central role in coupling the hydrolysis of ATP to the transfer of proteins into and across the cell membrane, serving as an ATP-driven molecular motor driving the stepwise translocation of polypeptide chains across the membrane. This is Protein translocase subunit SecA from Carboxydothermus hydrogenoformans (strain ATCC BAA-161 / DSM 6008 / Z-2901).